The following is a 290-amino-acid chain: Acetyl-coenzyme A carboxylase carboxyl transferase subunit beta (290 aa).

A CoA carboxyltransferase N-terminal domain is found at 27–290 (LWVKCPSCEA…LQRQPADALA (264 aa)). Residues Cys-31, Cys-34, Cys-50, and Cys-53 each coordinate Zn(2+). The C4-type zinc finger occupies 31–53 (CPSCEAVLYRNDVDANLHVCPKC).

Belongs to the AccD/PCCB family. In terms of assembly, acetyl-CoA carboxylase is a heterohexamer composed of biotin carboxyl carrier protein (AccB), biotin carboxylase (AccC) and two subunits each of ACCase subunit alpha (AccA) and ACCase subunit beta (AccD). Zn(2+) is required as a cofactor.

Its subcellular location is the cytoplasm. It catalyses the reaction N(6)-carboxybiotinyl-L-lysyl-[protein] + acetyl-CoA = N(6)-biotinyl-L-lysyl-[protein] + malonyl-CoA. Its pathway is lipid metabolism; malonyl-CoA biosynthesis; malonyl-CoA from acetyl-CoA: step 1/1. In terms of biological role, component of the acetyl coenzyme A carboxylase (ACC) complex. Biotin carboxylase (BC) catalyzes the carboxylation of biotin on its carrier protein (BCCP) and then the CO(2) group is transferred by the transcarboxylase to acetyl-CoA to form malonyl-CoA. The polypeptide is Acetyl-coenzyme A carboxylase carboxyl transferase subunit beta (Burkholderia multivorans (strain ATCC 17616 / 249)).